An 883-amino-acid chain; its full sequence is Glutamate receptor 2 (883 aa).

A signal peptide spans 1–24 (MQKIMHISVLLSPILWGLIFGVSS). Residues 25-543 (NSIQIGGLFP…GVFSFLDPLA (519 aa)) are Extracellular-facing. A disulfide bond links C78 and C330. N-linked (GlcNAc...) asparagine glycosylation is found at N256, N370, N406, and N413. The L-glutamate site is built by P499, T501, and R506. A helical transmembrane segment spans residues 544 to 564 (YEIWMCIVFAYIGVSVVLFLV). At 565 to 591 (SRFSPYEWHTEEFEDGRETQSSESTNE) the chain is on the cytoplasmic side. Positions 592–607 (FGIFNSLWFSLGAFMR) form an intramembrane region, helical; Pore-forming. An intramembrane segment occupies 608 to 610 (QGC). C610 is lipidated: S-palmitoyl cysteine. Residues 611–616 (DISPRS) are Cytoplasmic-facing. Residues 617–637 (LSGRIVGGVWWFFTLIIISSY) traverse the membrane as a helical segment. Topologically, residues 638-812 (TANLAAFLTV…EKTSALSLSN (175 aa)) are extracellular. Positions 675 and 676 each coordinate L-glutamate. The residue at position 683 (S683) is a Phosphoserine; by PKC. S717 is modified (phosphoserine; by PKG). L-glutamate is bound at residue E726. Cysteines 739 and 794 form a disulfide. Residues 813–833 (VAGVFYILVGGLGLAMLVALI) form a helical membrane-spanning segment. The Cytoplasmic segment spans residues 834 to 883 (EFCYKSRAEAKRMKVAKNAQNINPSSSQNSQNFATYKEGYNVYGIESVKI). The S-palmitoyl cysteine moiety is linked to residue C836. Residues S860 and S863 each carry the phosphoserine modification. Residues 867–877 (ATYKEGYNVYG) form a required for interaction with IQSEC1 region. At Y876 the chain carries Phosphotyrosine. Residue S880 is modified to Phosphoserine.

This sequence belongs to the glutamate-gated ion channel (TC 1.A.10.1) family. GRIA2 subfamily. Homotetramer or heterotetramer of pore-forming glutamate receptor subunits. Tetramers may be formed by the dimerization of dimers. May interact with MPP4. Forms a ternary complex with GRIP1 and CSPG4. Interacts with ATAD1 in an ATP-dependent manner. ATAD1-catalyzed ATP hydrolysis disrupts binding to ATAD1 and to GRIP1 and leads to AMPAR complex disassembly. Interacts with GRIP1 and GRIP2. Interacts with NSF via its C-terminus. Isoform 1, but not isoform 3, interacts with PICK1. Interacts with CACNG2. Interacts with GRIA1 and SYNDIG1. Part of a complex containing GRIA2, NSF and NAPA and/or NAPB. Interacts with SNX27 (via PDZ domain); the interaction is required for recycling to the plasma membrane when endocytosed and prevent degradation in lysosomes. Interacts with LRFN1. Found in a complex with GRIA1, GRIA3, GRIA4, CNIH2, CNIH3, CACNG2, CACNG3, CACNG4, CACNG5, CACNG7 and CACNG8. Interacts with CACNG5. Interacts with OLFM2. Interacts with AP4B1, AP4E1 and AP4M1; probably indirect it mediates the somatodendritic localization of GRIA2 in neurons. Forms a complex with GRIP1, NSG1 and STX12; controls the intracellular fate of AMPAR and the endosomal sorting of the GRIA2 subunit toward recycling and membrane targeting. Interacts with IQSEC1; the interaction is required for ARF6 activation. Interacts (heterotetramer form) with CNIH2 and CNIH3; this interaction promotes expression at the plasma membrane and extensively modulates their gating properties by slowing deactivation and desensitization kinetics. Phosphorylation at Tyr-876 is required for interaction with IQSEC1 and ARF6 activation, which in turn triggers AMPAR internalization for persistent synaptic depression. In terms of processing, palmitoylated. Depalmitoylated upon L-glutamate stimulation. ZDHHC3/GODZ specifically palmitoylates Cys-610, which leads to Golgi retention and decreased cell surface expression. In contrast, Cys-836 palmitoylation does not affect cell surface expression but regulates stimulation-dependent endocytosis. Post-translationally, N-glycosylated. Ubiquitinated by RNF167, leading to its degradation.

Its subcellular location is the cell membrane. It is found in the postsynaptic cell membrane. The protein localises to the postsynaptic density membrane. The enzyme catalyses Ca(2+)(in) = Ca(2+)(out). It catalyses the reaction Na(+)(in) = Na(+)(out). Functionally, ionotropic glutamate receptor that functions as a ligand-gated cation channel, gated by L-glutamate and glutamatergic agonists such as alpha-amino-3-hydroxy-5-methyl-4-isoxazolepropionic acid (AMPA), quisqualic acid, and kainic acid. L-glutamate acts as an excitatory neurotransmitter at many synapses in the central nervous system and plays an important role in fast excitatory synaptic transmission. Binding of the excitatory neurotransmitter L-glutamate induces a conformation change, leading to the opening of the cation channel, and thereby converts the chemical signal to an electrical impulse upon entry of monovalent and divalent cations such as sodium and calcium. The receptor then desensitizes rapidly and enters in a transient inactive state, characterized by the presence of bound agonist. In the presence of CACNG4 or CACNG7 or CACNG8, shows resensitization which is characterized by a delayed accumulation of current flux upon continued application of L-glutamate. Through complex formation with NSG1, GRIP1 and STX12 controls the intracellular fate of AMPAR and the endosomal sorting of the GRIA2 subunit toward recycling and membrane targeting. The sequence is that of Glutamate receptor 2 from Macaca fascicularis (Crab-eating macaque).